A 255-amino-acid chain; its full sequence is Menaquinol:cytochrome c reductase cytochrome c subunit (255 aa).

Transmembrane regions (helical) follow at residues 46–62 (WMVG…LTIV), 104–124 (VVGA…APFL), and 137–157 (VAVG…WQSV). One can recognise a Cytochrome c domain in the interval 178–253 (DTNAEGYKVF…ELAKFISETT (76 aa)). Heme c is bound by residues Cys192, Cys195, and His196.

This sequence belongs to the cytochrome b family. The main subunits of the menaquinol:cytochrome c complex are a Rieske-type iron-sulfur protein (QcrA), a cytochrome b (QcrB) and a cytochrome c (QcrC). It depends on heme c as a cofactor.

It is found in the cell membrane. Its function is as follows. Component of the menaquinol:cytochrome c reductase complex. The polypeptide is Menaquinol:cytochrome c reductase cytochrome c subunit (qcrC) (Bacillus subtilis (strain 168)).